A 316-amino-acid chain; its full sequence is Ribosomal RNA small subunit methyltransferase H (316 aa).

S-adenosyl-L-methionine-binding positions include 42 to 44 (GGH), Asp62, Phe86, Asp104, and Gln111.

Belongs to the methyltransferase superfamily. RsmH family.

It is found in the cytoplasm. The enzyme catalyses cytidine(1402) in 16S rRNA + S-adenosyl-L-methionine = N(4)-methylcytidine(1402) in 16S rRNA + S-adenosyl-L-homocysteine + H(+). Functionally, specifically methylates the N4 position of cytidine in position 1402 (C1402) of 16S rRNA. The polypeptide is Ribosomal RNA small subunit methyltransferase H (Polynucleobacter necessarius subsp. necessarius (strain STIR1)).